A 1447-amino-acid chain; its full sequence is Inositol 1,4,5-triphosphate receptor associated 2 (1447 aa).

The Cytoplasmic segment spans residues 1–1388 (MDVGVTPRRH…RPAVSRGARG (1388 aa)). Disordered stretches follow at residues 64 to 96 (VRPDDSDSASSAGMLTPTASPGPGSSCNTPRAP) and 420 to 439 (LSLTSSEESRAQAAAQRKQM). A compositionally biased stretch (polar residues) spans 71-92 (SASSAGMLTPTASPGPGSSCNT). 2 coiled-coil regions span residues 354 to 518 (FCVA…EYSS) and 665 to 731 (TDWI…DNRE). The segment covering 420–436 (LSLTSSEESRAQAAAQR) has biased composition (low complexity). 5 disordered regions span residues 790–828 (KQEEEEPTETVSDKEKITAKSEGEGEATYDSGVENEEPQ), 841–860 (KKSERESNEAPFVGEGGEQR), 991–1132 (PVAE…SPSD), 1267–1289 (NERSFGSHSERDDFRNKKQTTSN), and 1355–1379 (DEPTLMNSPTPSPTDNAPPSLMEGR). The segment covering 800 to 812 (VSDKEKITAKSEG) has biased composition (basic and acidic residues). Polar residues predominate over residues 1021–1035 (KKTVVTSDSNSTGSA). Basic and acidic residues-rich tracts occupy residues 1037–1049 (SLKDPSEKVKDMT) and 1080–1096 (KKEMSSMEVIEEQKAQE). The interval 1076–1265 (RNKLKKEMSS…ELLELRENLT (190 aa)) is necessary for spindle and spindle pole localization. The segment covering 1110 to 1119 (TSVSSENASD) has biased composition (polar residues). Positions 1120-1132 (STKDDKNSLSPSD) are enriched in basic and acidic residues. The segment covering 1359-1371 (LMNSPTPSPTDNA) has biased composition (polar residues). Residues 1388-1447 (GIWIWVALFVVLAVLLALLASLMLQPAVDAAPVGTGDSWMTIQQLLWPYTGLRHNGQPPV) are necessary for nuclear membrane localization. The chain crosses the membrane as a helical; Anchor for type IV membrane protein span at residues 1389–1409 (IWIWVALFVVLAVLLALLASL). Over 1410–1447 (MLQPAVDAAPVGTGDSWMTIQQLLWPYTGLRHNGQPPV) the chain is Lumenal.

This sequence belongs to the IRAG2 family.

It localises to the endoplasmic reticulum membrane. Its subcellular location is the nucleus envelope. The protein resides in the cytoplasm. The protein localises to the cytoskeleton. It is found in the microtubule organizing center. It localises to the centrosome. Its subcellular location is the spindle pole. The protein resides in the chromosome. Functionally, a maternally expressed membrane and cytoskeletal linker protein, which is essential for attachment of the centrosome to the male pronucleus. Promotes male and female pronucleus congression and subsequent fusion after fertilization. Congression is mediated by the sperm aster microtubules. The protein is Inositol 1,4,5-triphosphate receptor associated 2 (irag2) of Danio rerio (Zebrafish).